We begin with the raw amino-acid sequence, 246 residues long: uncharacterized protein (246 aa).

Basic residues-rich tracts occupy residues 1-10 (MVWRFQKHIG) and 79-97 (TRRR…KAGR). A disordered region spans residues 1–184 (MVWRFQKHIG…LPPAHVPPTL (184 aa)). The segment covering 158–180 (PPFPPPPPPGDPTPPSPLPPAHV) has biased composition (pro residues).

This is an uncharacterized protein from Homo sapiens (Human).